Reading from the N-terminus, the 83-residue chain is Cell division topological specificity factor (83 aa).

Belongs to the MinE family.

Prevents the cell division inhibition by proteins MinC and MinD at internal division sites while permitting inhibition at polar sites. This ensures cell division at the proper site by restricting the formation of a division septum at the midpoint of the long axis of the cell. This chain is Cell division topological specificity factor, found in Acidithiobacillus ferrooxidans (strain ATCC 23270 / DSM 14882 / CIP 104768 / NCIMB 8455) (Ferrobacillus ferrooxidans (strain ATCC 23270)).